The primary structure comprises 473 residues: MPRSLLGRMLLLTLLAVLVAQGLSSLFWLSHLRSSQREGLLTSSRSLAYSMAASVSYFRSLPLGYRPLVLDQLRSMGGTRFFVSLNDRPLEMRALPDTPNKQAVLEIVQDVLHQRLGKEVELQVEFVSPDELRLFNGALKLDELPRSWAHYALTLEPVNPPVLVTQIRIGESEWLYIASLMPAPYVSLEPEGLQPQQVLSIVFTSLLLLLFTGLLMHWQSRPLKRLARAARDLALGSPSAALEERGASELVEVARAFNTMHERIDRYLNERGQLFSAISHDLRTPITRLRLRVELLEDERLQEKFGRDLDELELLVKGALQCVKDTDIHENVESVDLNLLLQHIAEPYLADGRVEVVGRAAEPYPGKPLALKRCIGNLLDNALKYGERARLSLEDGPEAVVLHVDDDGPGVPEQRLEQIFEPRFRLSPRGQGYGLGLGIARNIAHTHGGEVSLQNRREGGLRVSLRLPRLGLE.

The Cytoplasmic segment spans residues 1–8 (MPRSLLGR). The helical transmembrane segment at 9–29 (MLLLTLLAVLVAQGLSSLFWL) threads the bilayer. The Periplasmic portion of the chain corresponds to 30–197 (SHLRSSQREG…LEPEGLQPQQ (168 aa)). A helical transmembrane segment spans residues 198 to 218 (VLSIVFTSLLLLLFTGLLMHW). Positions 217–269 (HWQSRPLKRLARAARDLALGSPSAALEERGASELVEVARAFNTMHERIDRYLN) constitute an HAMP domain. Topologically, residues 219–473 (QSRPLKRLAR…SLRLPRLGLE (255 aa)) are cytoplasmic. In terms of domain architecture, Histidine kinase spans 277–471 (AISHDLRTPI…RVSLRLPRLG (195 aa)). The residue at position 280 (histidine 280) is a Phosphohistidine; by autocatalysis.

In terms of processing, autophosphorylated.

It is found in the cell inner membrane. It catalyses the reaction ATP + protein L-histidine = ADP + protein N-phospho-L-histidine.. Its function is as follows. Member of the two-component regulatory system GtrS/GltR involved in the regulation of glucose metabolism and transport, as well as regulation of the exotoxin A gene expression. GtrS recognizes and binds 2-ketogluconate and 6-phosphogluconate via its sensor domain, which accelerates GtrS autophosphorylation and concomitant transphosphorylation and regulation of the response regulator GltR. In terms of biological role, plays a key role during bacteria-host interactions and is required for optimal colonization and dissemination in a mouse model of infection. Contributes to modulation of the type III secretion system (T3SS) in response to host cells via the regulation of the OprB transport system. The polypeptide is Sensor histidine kinase GtrS (Pseudomonas aeruginosa (strain ATCC 15692 / DSM 22644 / CIP 104116 / JCM 14847 / LMG 12228 / 1C / PRS 101 / PAO1)).